The following is a 491-amino-acid chain: Cytochrome P450 2H2 (491 aa).

Cysteine 436 provides a ligand contact to heme.

Belongs to the cytochrome P450 family. The cofactor is heme.

It is found in the endoplasmic reticulum membrane. The protein localises to the microsome membrane. It carries out the reaction an organic molecule + reduced [NADPH--hemoprotein reductase] + O2 = an alcohol + oxidized [NADPH--hemoprotein reductase] + H2O + H(+). Cytochromes P450 are a group of heme-thiolate monooxygenases. In liver microsomes, this enzyme is involved in an NADPH-dependent electron transport pathway. It oxidizes a variety of structurally unrelated compounds, including steroids, fatty acids, and xenobiotics. This Gallus gallus (Chicken) protein is Cytochrome P450 2H2 (CYP2H2).